The primary structure comprises 264 residues: MLSHNTMVKQRKQQASAIMKEIHGNDVDVMHLGKKVSIPRDIMLEELSHLSNRGARLFKMRQRRSDKYTFENFQYETKAQINHNIAMQNEKLDGINLESGSQQAPFTPPNTPDPRSPPNPENIAPGYSGPLKEIPPERFNTTAVPKYYQSPWEQAISNDPELLEALYPKFFKPEGKAELPDYRSFNRVATPFGGFEKASKMVKFKVPDFDLLLLTDPRFMAFANPLSGRRSFNRTPKGWISENIPIVITTEPTEDNTIPESEDL.

Position 53 is an omega-N-methylarginine (arginine 53). Residues 98–134 (ESGSQQAPFTPPNTPDPRSPPNPENIAPGYSGPLKEI) form a disordered region. A Phosphoserine modification is found at serine 101. Positions 106-120 (FTPPNTPDPRSPPNP) are enriched in pro residues. Phosphothreonine occurs at positions 107 and 111. At serine 116 the chain carries Phosphoserine.

The protein belongs to the myozenin family. Interacts via its C-terminus with spectrin repeats 3 and 4 of ACTN2. Interacts with ACTN1, LDB3, MYOT and PPP3CA.

Its subcellular location is the cytoplasm. The protein resides in the myofibril. It is found in the sarcomere. The protein localises to the z line. Its function is as follows. Myozenins may serve as intracellular binding proteins involved in linking Z line proteins such as alpha-actinin, gamma-filamin, TCAP/telethonin, LDB3/ZASP and localizing calcineurin signaling to the sarcomere. Plays an important role in the modulation of calcineurin signaling. May play a role in myofibrillogenesis. This is Myozenin-2 (MYOZ2) from Bos taurus (Bovine).